A 297-amino-acid polypeptide reads, in one-letter code: Homoserine kinase (297 aa).

Residue 82–92 (PLTRGLGSSAS) coordinates ATP.

The protein belongs to the GHMP kinase family. Homoserine kinase subfamily.

The protein resides in the cytoplasm. The enzyme catalyses L-homoserine + ATP = O-phospho-L-homoserine + ADP + H(+). The protein operates within amino-acid biosynthesis; L-threonine biosynthesis; L-threonine from L-aspartate: step 4/5. Catalyzes the ATP-dependent phosphorylation of L-homoserine to L-homoserine phosphate. This Bacillus cereus (strain B4264) protein is Homoserine kinase.